Here is a 242-residue protein sequence, read N- to C-terminus: Interleukin-34 (242 aa).

The first 20 residues, 1–20, serve as a signal peptide directing secretion; the sequence is MPRGFTWLRYLGIFLGVALG. Asn76 carries an N-linked (GlcNAc...) asparagine glycan. The segment at 210 to 242 is disordered; sequence TQLYPPPPWSPSSPPHSTGSVRPVRAQGEGLLP. The segment covering 213-223 has biased composition (pro residues); the sequence is YPPPPWSPSSP.

This sequence belongs to the IL-34 family. Homodimer. Interacts with CSF1R. Detected in the sinusoidal epithelium in the red pulp of spleen (at protein level). Predominantly expressed in spleen. Also detected in a range of other tissues including heart, brain, lung, liver, kidney, thymus, testis, ovary, small intestine, prostate and colon.

The protein resides in the secreted. In terms of biological role, cytokine that promotes the proliferation, survival and differentiation of monocytes and macrophages. Promotes the release of pro-inflammatory chemokines, and thereby plays an important role in innate immunity and in inflammatory processes. Plays an important role in the regulation of osteoclast proliferation and differentiation, and in the regulation of bone resorption. Signaling via CSF1R and its downstream effectors stimulates phosphorylation of MAPK1/ERK2 AND MAPK3/ERK1. The chain is Interleukin-34 (IL34) from Homo sapiens (Human).